The sequence spans 293 residues: Short-chain dehydrogenase/reductase PhomF' (293 aa).

NADP(+) contacts are provided by Ile31 and Asn102. Residue Ser175 is the Proton donor of the active site. The NADP(+) site is built by Tyr190, Lys194, and Ser225. Tyr190 serves as the catalytic Proton acceptor. Residue Lys194 is the Lowers pKa of active site Tyr of the active site.

It belongs to the short-chain dehydrogenases/reductases (SDR) family.

In terms of biological role, short-chain dehydrogenase/reductase; part of the gene cluster that mediates the biosynthesis of the phomopsins, a group of hexapeptide mycotoxins which infects lupins and causes lupinosis disease in livestock. The role of phomF' within the phomopsins biosynthesis pathway has still to be determined. The pathway starts with the processing of the precursor phomA by several endopeptidases including kexin proteases as well as the cluster-specific S41 family peptidase phomP1 and the oligopeptidase phomG to produce 10 identical copies of the hexapeptide Tyr-Val-Ile-Pro-Ile-Asp. After being excised from the precursor peptide, the core peptides are cyclized and modified post-translationally by enzymes encoded within the gene cluster. The timing and order of proteolysis of the phomA precursor and PTMs are still unknown. Two tyrosinase-like enzymes, phomQ1 and phomQ2, catalyze the chlorination and hydroxylation of Tyr, respectively. PhomYb, is proposed to be involved in the construction of the macrocyclic structure. The other 4 ustYa family proteins may be involved in PTMs that generate the unique structure of phomopsin A. PhomYa is required for the hydroxylation of C-beta of Tyr. PhomYc, phomYd, and phomYe are responsible for the biosynthesis of 2,3-dehydroisoleucine (dIle), 2,3-dehydroaspartic acid (dAsp), and 3,4-dehydroproline (dPro), respectively. While dIle formation by phomYc is indispensable for the installation of dAsp by phomYd, the order of the other PTMs have not been elucidated yet. Most of the biosynthetic enzymes likely have broad substrate specificity, and thus, there might be a metabolic grid from a precursor to phomopsin A. The enzyme(s) responsible for the biosynthesis of 3,4-dehydrovaline (dVal) have also not been identified yet. Finally, phomM acts as an S-adenosylmethionine-dependent alpha-N-methyltransferase that catalyzes two successive N-methylation reactions, converting N-desmethyl-phomopsin A to phomopsin A and phomopsin A further to an N,N-dimethylated congener called phomopsin E. This Diaporthe leptostromiformis (Lupinosis disease fungus) protein is Short-chain dehydrogenase/reductase PhomF'.